The sequence spans 323 residues: GDP-mannose 4,6-dehydratase (323 aa).

Residues 11–14 (TGQD), Arg-36, 59–60 (DM), and 81–85 (LAAQS) contribute to the NADP(+) site. The active site involves Thr-126. Active-site nucleophile residues include Glu-128 and Tyr-150. The NADP(+) site is built by Lys-154, His-180, and Arg-185.

The protein belongs to the NAD(P)-dependent epimerase/dehydratase family. GDP-mannose 4,6-dehydratase subfamily. Homotetramer. NADP(+) serves as cofactor.

The catalysed reaction is GDP-alpha-D-mannose = GDP-4-dehydro-alpha-D-rhamnose + H2O. It participates in bacterial outer membrane biogenesis; lipopolysaccharide biosynthesis. Catalyzes the conversion of GDP-D-mannose to GDP-4-dehydro-6-deoxy-D-mannose. The polypeptide is GDP-mannose 4,6-dehydratase (Pseudomonas aeruginosa (strain ATCC 15692 / DSM 22644 / CIP 104116 / JCM 14847 / LMG 12228 / 1C / PRS 101 / PAO1)).